Consider the following 150-residue polypeptide: Large ribosomal subunit protein bL9 (150 aa).

It belongs to the bacterial ribosomal protein bL9 family.

Binds to the 23S rRNA. The polypeptide is Large ribosomal subunit protein bL9 (Streptococcus pyogenes serotype M3 (strain SSI-1)).